Here is a 170-residue protein sequence, read N- to C-terminus: Large ribosomal subunit protein uL22c (170 aa).

The protein belongs to the universal ribosomal protein uL22 family. As to quaternary structure, part of the 50S ribosomal subunit.

It localises to the plastid. The protein resides in the chloroplast. Functionally, this protein binds specifically to 23S rRNA. The globular domain of the protein is located near the polypeptide exit tunnel on the outside of the subunit, while an extended beta-hairpin is found that lines the wall of the exit tunnel in the center of the 70S ribosome. The polypeptide is Large ribosomal subunit protein uL22c (rpl22) (Nandina domestica (Heavenly bamboo)).